The sequence spans 200 residues: 3-isopropylmalate dehydratase small subunit (200 aa).

This sequence belongs to the LeuD family. LeuD type 1 subfamily. As to quaternary structure, heterodimer of LeuC and LeuD.

The catalysed reaction is (2R,3S)-3-isopropylmalate = (2S)-2-isopropylmalate. It participates in amino-acid biosynthesis; L-leucine biosynthesis; L-leucine from 3-methyl-2-oxobutanoate: step 2/4. Catalyzes the isomerization between 2-isopropylmalate and 3-isopropylmalate, via the formation of 2-isopropylmaleate. This chain is 3-isopropylmalate dehydratase small subunit, found in Haemophilus influenzae (strain 86-028NP).